The chain runs to 1028 residues: Beta-galactosidase (1028 aa).

Substrate is bound by residues Asn104 and Asp203. Asp203 is a binding site for Na(+). 3 residues coordinate Mg(2+): Glu418, His420, and Glu463. Residues Glu463 and 539–542 (EYAH) each bind substrate. Glu463 acts as the Proton donor in catalysis. Catalysis depends on Glu539, which acts as the Nucleophile. Asn599 serves as a coordination point for Mg(2+). Residues Phe603 and Asn606 each contribute to the Na(+) site. Residues Asn606 and Trp1004 each coordinate substrate.

It belongs to the glycosyl hydrolase 2 family. As to quaternary structure, homotetramer. It depends on Mg(2+) as a cofactor. The cofactor is Na(+).

The catalysed reaction is Hydrolysis of terminal non-reducing beta-D-galactose residues in beta-D-galactosides.. The sequence is that of Beta-galactosidase from Enterobacter sp. (strain 638).